Reading from the N-terminus, the 1044-residue chain is R3H domain-containing protein 2 (1044 aa).

Disordered regions lie at residues 23-71 and 106-147; these read EESV…AKSN and SCPS…QEYT. A compositionally biased stretch (basic and acidic residues) spans 36 to 56; it reads PSKEDVEKEGEENGLRQETQR. S37 is subject to Phosphoserine. Residues 58 to 71 are compositionally biased toward basic residues; that stretch reads TSSHGHARKRAKSN. Residues 109–143 are compositionally biased toward basic and acidic residues; it reads SDKEEEKSTKDVSEKEDKDKSKEKVPRKMLSRDSS. S143 is subject to Phosphoserine. One can recognise an R3H domain in the interval 169–232; the sequence is RMMLLKLEQE…AVIINKTSST (64 aa). An SUZ domain is found at 233 to 303; sequence RIPEQRFSEH…VRERIFARET (71 aa). 2 stretches are compositionally biased toward basic and acidic residues: residues 261–270 and 277–288; these read DASMDRDDNQ and DGRRSKSIEERE. Disordered stretches follow at residues 261–288, 320–408, 433–485, 502–533, 551–600, 729–770, and 807–848; these read DASM…EERE, SSSS…LSRP, CTAQ…FSPS, MAED…LFQP, GQPL…SNQQ, GTSP…SPSG, and GQKP…SLSN. Positions 338 to 349 are enriched in low complexity; sequence SRTSSSRQSSTD. Phosphoserine occurs at positions 362, 365, and 381. Residues 433–449 show a composition bias toward low complexity; the sequence is CTAQQQQQQQQQQQQLP. Composition is skewed to polar residues over residues 509–521 and 554–572; these read PFGQ…QGST and LPTS…QQVL. Over residues 757–770 the composition is skewed to low complexity; sequence PQMSQQYSGVSPSG. A compositionally biased stretch (polar residues) spans 818–848; it reads GSPQANAQMGSSPVTSPTQSPAPSPVTSLSN. Phosphoserine occurs at positions 921 and 923. Residues T924 and T928 each carry the phosphothreonine modification.

The protein resides in the nucleus. In Mus musculus (Mouse), this protein is R3H domain-containing protein 2 (R3hdm2).